The following is a 239-amino-acid chain: Probable transcriptional regulatory protein Sca_0317 (239 aa).

The protein belongs to the TACO1 family. YeeN subfamily.

It localises to the cytoplasm. This Staphylococcus carnosus (strain TM300) protein is Probable transcriptional regulatory protein Sca_0317.